The primary structure comprises 94 residues: Co-chaperonin GroES (94 aa).

This sequence belongs to the GroES chaperonin family. In terms of assembly, heptamer of 7 subunits arranged in a ring. Interacts with the chaperonin GroEL.

The protein localises to the cytoplasm. Its function is as follows. Together with the chaperonin GroEL, plays an essential role in assisting protein folding. The GroEL-GroES system forms a nano-cage that allows encapsulation of the non-native substrate proteins and provides a physical environment optimized to promote and accelerate protein folding. GroES binds to the apical surface of the GroEL ring, thereby capping the opening of the GroEL channel. The polypeptide is Co-chaperonin GroES (Streptococcus pneumoniae serotype 19F (strain G54)).